The chain runs to 60 residues: MDPCECSKTGNCTCGGSCTCKNCSCTSCKKSCCSCCPSGCSKCASGCVCKGKTCDTSCCQ.

The tract at residues 1–28 is beta; it reads MDPCECSKTGNCTCGGSCTCKNCSCTSC. A divalent metal cation contacts are provided by Cys4, Cys6, Cys12, Cys14, Cys18, Cys20, Cys23, Cys25, Cys28, Cys32, Cys33, Cys35, Cys36, Cys40, Cys43, Cys47, Cys49, Cys54, Cys58, and Cys59. An alpha region spans residues 29–60; that stretch reads KKSCCSCCPSGCSKCASGCVCKGKTCDTSCCQ.

This sequence belongs to the metallothionein superfamily. Type 1 family.

In terms of biological role, metallothioneins have a high content of cysteine residues that bind various heavy metals. The chain is Metallothionein (mt) from Gobiomorphus cotidianus (New Zealand common bully).